The primary structure comprises 410 residues: Lipoyl synthase, mitochondrial (410 aa).

The N-terminal 29 residues, 1–29, are a transit peptide targeting the mitochondrion; the sequence is MASTTVCSAARIRVASSQVLRSIANTRTY. Residues 29 to 39 show a composition bias toward polar residues; that stretch reads YATTSPESSIP. The tract at residues 29 to 49 is disordered; the sequence is YATTSPESSIPETKPTAKRTP. Residues cysteine 129, cysteine 134, cysteine 140, cysteine 160, cysteine 164, cysteine 167, and serine 375 each contribute to the [4Fe-4S] cluster site. The 222-residue stretch at 143–364 folds into the Radical SAM core domain; sequence GGSKAAATAT…KEKAMEMGFL (222 aa).

This sequence belongs to the radical SAM superfamily. Lipoyl synthase family. [4Fe-4S] cluster serves as cofactor.

The protein resides in the mitochondrion. It carries out the reaction [[Fe-S] cluster scaffold protein carrying a second [4Fe-4S](2+) cluster] + N(6)-octanoyl-L-lysyl-[protein] + 2 oxidized [2Fe-2S]-[ferredoxin] + 2 S-adenosyl-L-methionine + 4 H(+) = [[Fe-S] cluster scaffold protein] + N(6)-[(R)-dihydrolipoyl]-L-lysyl-[protein] + 4 Fe(3+) + 2 hydrogen sulfide + 2 5'-deoxyadenosine + 2 L-methionine + 2 reduced [2Fe-2S]-[ferredoxin]. It functions in the pathway protein modification; protein lipoylation via endogenous pathway; protein N(6)-(lipoyl)lysine from octanoyl-[acyl-carrier-protein]: step 2/2. Functionally, catalyzes the radical-mediated insertion of two sulfur atoms into the C-6 and C-8 positions of the octanoyl moiety bound to the lipoyl domains of lipoate-dependent enzymes, thereby converting the octanoylated domains into lipoylated derivatives. The chain is Lipoyl synthase, mitochondrial from Arthroderma otae (strain ATCC MYA-4605 / CBS 113480) (Microsporum canis).